A 328-amino-acid polypeptide reads, in one-letter code: Formimidoylglutamase (328 aa).

H133, D159, H161, D163, D253, and D255 together coordinate Mn(2+).

Belongs to the arginase family. Mn(2+) is required as a cofactor.

It catalyses the reaction N-formimidoyl-L-glutamate + H2O = formamide + L-glutamate. Its pathway is amino-acid degradation; L-histidine degradation into L-glutamate; L-glutamate from N-formimidoyl-L-glutamate (hydrolase route): step 1/1. Catalyzes the conversion of N-formimidoyl-L-glutamate to L-glutamate and formamide. In Streptococcus pyogenes serotype M18 (strain MGAS8232), this protein is Formimidoylglutamase.